Reading from the N-terminus, the 287-residue chain is uncharacterized protein (287 aa).

Positions 1-17 are enriched in basic and acidic residues; sequence MRWQGRRESDNVEDRRN. The interval 1–29 is disordered; sequence MRWQGRRESDNVEDRRNSSGGPSMGGPGF. The helical transmembrane segment at 38–60 threads the bilayer; it reads LILLIVVLVAGYYGVDLTGLMTG.

It localises to the membrane. This is an uncharacterized protein from Escherichia coli O6:H1 (strain CFT073 / ATCC 700928 / UPEC).